A 144-amino-acid polypeptide reads, in one-letter code: Maximins 11/H1 (144 aa).

Residues 1-18 form the signal peptide; sequence MNFKYIVAVSFLIASAYA. Residues 19–43 constitute a propeptide that is removed on maturation; sequence RSEENDEQSLSQRDVLEEESLREIR. N70 carries the post-translational modification Asparagine amide. Positions 74 to 123 are excised as a propeptide; it reads TAEDHEVMKRLEAVMRDLDSLDYPEEASERETRGFNQEEIANLFTKKEKR. L143 carries the leucine amide modification.

Belongs to the bombinin family. As to expression, expressed by the skin glands.

It localises to the secreted. Its function is as follows. Maximin-11 shows antimicrobial activity against bacteria and against the fungus C.albicans. It has little hemolytic activity. Functionally, maximin-H1 shows antibacterial activity against both Gram-positive and Gram-negative bacteria. It also shows antimicrobial activity against the fungus C.albicans. Shows strong hemolytic activity. This chain is Maximins 11/H1, found in Bombina maxima (Giant fire-bellied toad).